A 443-amino-acid chain; its full sequence is Delta(6)-fatty-acid desaturase fat-3 (443 aa).

Positions 1–71 (MVVDKNASGL…DLLKKHGEHD (71 aa)) constitute a Cytochrome b5 heme-binding domain. The next 3 membrane-spanning stretches (helical) occupy residues 136–156 (IMAF…ACLL), 296–316 (TIVG…TWPL), and 318–338 (VAYF…VVTF).

Belongs to the fatty acid desaturase type 1 family.

The protein localises to the membrane. It catalyses the reaction (9Z,12Z)-octadecadienoyl-CoA + 2 Fe(II)-[cytochrome b5] + O2 + 2 H(+) = (6Z,9Z,12Z)-octadecatrienoyl-CoA + 2 Fe(III)-[cytochrome b5] + 2 H2O. The catalysed reaction is (9Z,12Z,15Z)-octadecatrienoyl-CoA + 2 Fe(II)-[cytochrome b5] + O2 + 2 H(+) = (6Z,9Z,12Z,15Z)-octadecatetraenoyl-CoA + 2 Fe(III)-[cytochrome b5] + 2 H2O. The protein operates within lipid metabolism; polyunsaturated fatty acid biosynthesis. Its function is as follows. Can function as a Delta(6) fatty acid desaturase. Introduces a double bond in the fatty acid chain 6 carbons away from carboxy terminal to biosynthesize polyunsaturated fatty acids (PUFAs) endogenously (PUFAs are essential for membrane structure and many cellular and physiological processes). Acts on a variety of substrates such as linoleoyl-CoA ((9Z,12Z)-octadecadienoyl-CoA, C18:2n-6) and alpha-linolenoyl-CoA ((9Z,12Z,15Z)-octadecatrienoyl-CoA, C18:3n-3) to produce gamma-linolenoyl-CoA ((6Z,9Z,12Z)-octadecatrienoyl-CoA, C18:3n-6) and (6Z,9Z,12Z,15Z)-octadecatetraenoyl-CoA (18:4n-3) respectively. Unlike plants, Caenorhabditis elegans desaturases seem to use fatty acyl-CoAs as substrates. Plays a role in synaptic vesicle recycling by regulating synaptojanin unc-26 localization at synapses. The polypeptide is Delta(6)-fatty-acid desaturase fat-3 (fat-3) (Caenorhabditis elegans).